Consider the following 507-residue polypeptide: ATP synthase subunit alpha, chloroplastic (507 aa).

169-176 is an ATP binding site; it reads IGDRQTGK.

It belongs to the ATPase alpha/beta chains family. In terms of assembly, F-type ATPases have 2 components, CF(1) - the catalytic core - and CF(0) - the membrane proton channel. CF(1) has five subunits: alpha(3), beta(3), gamma(1), delta(1), epsilon(1). CF(0) has four main subunits: a, b, b' and c.

It is found in the plastid. It localises to the chloroplast thylakoid membrane. It carries out the reaction ATP + H2O + 4 H(+)(in) = ADP + phosphate + 5 H(+)(out). Produces ATP from ADP in the presence of a proton gradient across the membrane. The alpha chain is a regulatory subunit. The chain is ATP synthase subunit alpha, chloroplastic from Saccharum hybrid (Sugarcane).